Consider the following 530-residue polypeptide: Type 2 DNA topoisomerase 6 subunit B (530 aa).

ATP-binding positions include asparagine 42, aspartate 76, 97 to 98 (SK), 106 to 113 (GMYGLGVK), and lysine 427.

Belongs to the TOP6B family. Homodimer. Heterotetramer of two Top6A and two Top6B chains.

It catalyses the reaction ATP-dependent breakage, passage and rejoining of double-stranded DNA.. In terms of biological role, relaxes both positive and negative superturns and exhibits a strong decatenase activity. This is Type 2 DNA topoisomerase 6 subunit B from Saccharolobus islandicus (strain Y.N.15.51 / Yellowstone #2) (Sulfolobus islandicus).